Reading from the N-terminus, the 145-residue chain is AP-2 complex subunit sigma (145 aa).

Belongs to the adaptor complexes small subunit family. Adaptor protein complex 2 (AP-2) is a heterotetramer composed of two large adaptins (alpha-type subunit apl3 and beta-type subunit apl1), a medium chain (mu-type subunit apm4) and a small adaptin (sigma-type subunit aps2).

The protein resides in the cell membrane. It localises to the membrane. It is found in the coated pit. Its function is as follows. Component of the adaptor complexes which link clathrin to receptors in coated vesicles. Clathrin-associated protein complexes are believed to interact with the cytoplasmic tails of membrane proteins, leading to their selection and concentration. The polypeptide is AP-2 complex subunit sigma (aps2) (Aspergillus fumigatus (strain ATCC MYA-4609 / CBS 101355 / FGSC A1100 / Af293) (Neosartorya fumigata)).